We begin with the raw amino-acid sequence, 859 residues long: MVSIAFYGGIPGGISTPITQQSEKSKYEENTMFQPYCYNNDSKNSMAESKEARDQEMNLKEESKEEKRRNDWWKIGMFLLCLAGTTGGILWWYEGLPQQHYIGLVAIGGRLNGSGQSNAIECWGSFPGCRPFQNYFSYETNRSMHMDNNTATLLEAYHREITFIYKSSCTDSDHCQEYQCKKVNLNSSDSSNSVRVEDVTNTAEYWGFKWLECNQTENFKTILVPENEMVNINDTDTWIPKGCNETWARVKRCPIDILYGIHPIRLCVQPPFFLVQEKGIADTSRIGNCGPTIFLGVLEDNKGVVRGDYTACNVSRLNINRKDYTGIYQVPIFYTCTFTNITSCNNEPIISVIMYETNQVQYLLCNNNNSNNYNCVVQSFGVIGQAHLELPRPNKRIRNQSFNQYNCSINNKTELETWKLVKTSGITPLPISSEANTGLIRHKRDFGISAIVAAIVAATAIAASATMSYVALTEVNKIMEVQNHTFEVENSTLNGMDLIERQIKILYAMILQTHADVQLLKERQQVEETFNLIGCIERTHVFCHTGHPWNMSWGHLNESTQWDDWVSKMEDLNQEILTTLHGARNNLAQSMITFNTPDSIAQFGKDLWSHIGNWIPGLGASIIKYIVMFLLIYLLLTSSPKILRALWKVTSGAGSSGSRYLKKKFHHKHASREDTWDQAQHNIHLAGVTGGSGDKYYKQKYSRNDWNGESEEYNRRPKSWVKSIEAFGESYISEKTKGEISQPGAAINEHKNGSGGNNPHQGSLDLEIRSEGGNIYDCCIKAQEGTLAIPCCGFPLWLFWGLVIIVGRIAGYGLRGLAVIIRICTRGLNLIFEIIRKMLDYIGRALNPGTSHVSMPQYV.

Residues 1 to 6 (MVSIAF) constitute a propeptide that is removed on maturation. Residues 7-614 (YGGIPGGIST…KDLWSHIGNW (608 aa)) lie on the Extracellular side of the membrane. N-linked (GlcNAc...) asparagine; by host glycans are attached at residues N40, N112, N141, N148, N186, N214, N233, N244, N313, N340, N368, N399, N406, and N411. The segment at 446 to 466 (FGISAIVAAIVAATAIAASAT) is fusion peptide. Residues N483 and N490 are each glycosylated (N-linked (GlcNAc...) asparagine; by host). The tract at residues 498–513 (LIERQIKILYAMILQT) is immunosuppression. Residues N550 and N557 are each glycosylated (N-linked (GlcNAc...) asparagine; by host). Coiled-coil stretches lie at residues 576–624 (ILTT…SIIK) and 663–699 (KKFH…YYKQ). A helical transmembrane segment spans residues 615 to 635 (IPGLGASIIKYIVMFLLIYLL). At 636 to 859 (LTSSPKILRA…TSHVSMPQYV (224 aa)) the chain is on the cytoplasmic side.

In terms of assembly, the mature envelope protein (Env) consists of a trimer of SU-TM heterodimers attached by noncovalent interactions or by a labile interchain disulfide bond. Specific enzymatic cleavages in vivo yield mature proteins. Envelope glycoproteins are synthesized as an inactive precursor that is N-glycosylated and processed likely by host cell furin or by a furin-like protease in the Golgi to yield the mature SU and TM proteins. The cleavage site between SU and TM requires the minimal sequence [KR]-X-[KR]-R.

It localises to the virion membrane. The protein resides in the host cell membrane. Functionally, the surface protein (SU) attaches the virus to the host cell by binding to its receptor. This interaction triggers the refolding of the transmembrane protein (TM) and is thought to activate its fusogenic potential by unmasking its fusion peptide. Fusion occurs at the host cell plasma membrane. The transmembrane protein (TM) acts as a class I viral fusion protein. Under the current model, the protein has at least 3 conformational states: pre-fusion native state, pre-hairpin intermediate state, and post-fusion hairpin state. During viral and target cell membrane fusion, the coiled coil regions (heptad repeats) assume a trimer-of-hairpins structure, positioning the fusion peptide in close proximity to the C-terminal region of the ectodomain. The formation of this structure appears to drive apposition and subsequent fusion of viral and target cell membranes. Membranes fusion leads to delivery of the nucleocapsid into the cytoplasm. In Equus asinus (Donkey), this protein is Envelope glycoprotein (env).